A 113-amino-acid chain; its full sequence is U-scoloptoxin(16)-Sa1a (113 aa).

The N-terminal stretch at 1 to 29 (MAPPSNPLFVVLCWALFAYLMLVLRDIQA) is a signal peptide.

The protein belongs to the scoloptoxin-16 family. In terms of processing, contains 4 disulfide bonds. In terms of tissue distribution, expressed by the venom gland.

The protein localises to the secreted. This Scolopendra alternans (Florida Keys giant centipede) protein is U-scoloptoxin(16)-Sa1a.